We begin with the raw amino-acid sequence, 669 residues long: Probable pectinesterase/pectinesterase inhibitor 21 (669 aa).

Residues 16 to 36 traverse the membrane as a helical segment; sequence IVITISSVLLISMVVAVTVGV. Residues Asn-52, Asn-81, Asn-94, Asn-281, and Asn-300 are each glycosylated (N-linked (GlcNAc...) asparagine). The interval 52–205 is pectinesterase inhibitor 21; it reads NASVKAVKDV…IELTHNGLAI (154 aa). Positions 255–551 are pectinesterase 21; that stretch reads DIVVAQDGSG…FTPAQYIQGD (297 aa). Substrate-binding residues include Thr-330 and Gln-360. Asp-383 serves as the catalytic Proton donor; for pectinesterase activity. Cys-397 and Cys-417 are oxidised to a cystine. The active-site Nucleophile; for pectinesterase activity is the Asp-404. Asn-416 carries N-linked (GlcNAc...) asparagine glycosylation. Residues Arg-472 and Trp-474 each contribute to the substrate site. The segment at 615-669 is disordered; sequence AYTGTASPESSIKVSSSTETASPESSFTEASTASPESSIMVASTESSGSFFSMFT. A compositionally biased stretch (polar residues) spans 616-628; the sequence is YTGTASPESSIKV. The segment covering 629 to 652 has biased composition (low complexity); sequence SSSTETASPESSFTEASTASPESS. The segment covering 654–669 has biased composition (polar residues); the sequence is MVASTESSGSFFSMFT.

This sequence in the N-terminal section; belongs to the PMEI family. It in the C-terminal section; belongs to the pectinesterase family. Expressed in flower buds.

The protein localises to the membrane. It catalyses the reaction [(1-&gt;4)-alpha-D-galacturonosyl methyl ester](n) + n H2O = [(1-&gt;4)-alpha-D-galacturonosyl](n) + n methanol + n H(+). It functions in the pathway glycan metabolism; pectin degradation; 2-dehydro-3-deoxy-D-gluconate from pectin: step 1/5. Acts in the modification of cell walls via demethylesterification of cell wall pectin. In Arabidopsis thaliana (Mouse-ear cress), this protein is Probable pectinesterase/pectinesterase inhibitor 21 (PME21).